The sequence spans 216 residues: tRNA (guanine-N(7)-)-methyltransferase (216 aa).

Residues Glu44, Glu69, Asn97, and Asp119 each contribute to the S-adenosyl-L-methionine site. Asp119 is an active-site residue. Substrate contacts are provided by residues Lys123, Asp155, and 192–195 (TEYE).

It belongs to the class I-like SAM-binding methyltransferase superfamily. TrmB family.

It carries out the reaction guanosine(46) in tRNA + S-adenosyl-L-methionine = N(7)-methylguanosine(46) in tRNA + S-adenosyl-L-homocysteine. The protein operates within tRNA modification; N(7)-methylguanine-tRNA biosynthesis. Functionally, catalyzes the formation of N(7)-methylguanine at position 46 (m7G46) in tRNA. The chain is tRNA (guanine-N(7)-)-methyltransferase from Lysinibacillus sphaericus (strain C3-41).